A 541-amino-acid chain; its full sequence is Beta-hexosaminidase 1 (541 aa).

The N-terminal stretch at 1-20 (MSTNLLRLILLFITLSITSS) is a signal peptide. Asparagine 44 and asparagine 304 each carry an N-linked (GlcNAc...) asparagine glycan. An intrachain disulfide couples cysteine 295 to cysteine 337. The active-site Proton donor is glutamate 332. 3 N-linked (GlcNAc...) asparagine glycosylation sites follow: asparagine 340, asparagine 352, and asparagine 497. Cysteine 511 and cysteine 538 are joined by a disulfide.

The protein belongs to the glycosyl hydrolase 20 family. In terms of processing, N-glycosylated. As to expression, expressed in roots, leaves, stems, flowers and siliques.

Its subcellular location is the vacuole. The enzyme catalyses Hydrolysis of terminal non-reducing N-acetyl-D-hexosamine residues in N-acetyl-beta-D-hexosaminides.. Its activity is regulated as follows. Inhibited by N-acetylcastanospermine, 2-acet-amido-1,2-dideoxynojirimycin and PUGNAc. Has a broad substrate specificity. Can use synthetic substrates such as pyridylaminated chitotriose, pyridylaminated chitobiose, p-nitrophenyl-beta-N-acetylglucosaminide, p-nitrophenyl-2-acetamido-2-deoxy-beta-D-glucopyranoside (pNP-GlcNAc), p-nitrophenyl-2-acetamido-2-deoxy-beta-D-galactopyranoside (pNP-GalNAc), 4-methylumbelliferyl-2-acetamido-2-deoxy-beta-D-glucopyranoside (MU-GlcNAc), and 4-methylumbelliferyl-6-sulfo-2-acetamido-2-deoxy-beta-D-glucopyranoside (MU-GlcNAc-6SO(4)) as substrates. Removes terminal GlcNAc residues from alpha1,3- and alpha1,6-mannosyl branches of biantennary N-glycans without any strict branch preference. Required for the presence of paucimannosidic N-glycans in glycoproteins of roots and, to a lower extent, of leaves. This chain is Beta-hexosaminidase 1 (HEXO1), found in Arabidopsis thaliana (Mouse-ear cress).